Here is a 317-residue protein sequence, read N- to C-terminus: Methionyl-tRNA formyltransferase (317 aa).

112–115 (SLLP) provides a ligand contact to (6S)-5,6,7,8-tetrahydrofolate.

It belongs to the Fmt family.

It carries out the reaction L-methionyl-tRNA(fMet) + (6R)-10-formyltetrahydrofolate = N-formyl-L-methionyl-tRNA(fMet) + (6S)-5,6,7,8-tetrahydrofolate + H(+). In terms of biological role, attaches a formyl group to the free amino group of methionyl-tRNA(fMet). The formyl group appears to play a dual role in the initiator identity of N-formylmethionyl-tRNA by promoting its recognition by IF2 and preventing the misappropriation of this tRNA by the elongation apparatus. The protein is Methionyl-tRNA formyltransferase of Mycoplasma mycoides subsp. mycoides SC (strain CCUG 32753 / NCTC 10114 / PG1).